The chain runs to 342 residues: Probable dual-specificity RNA methyltransferase RlmN (342 aa).

The active-site Proton acceptor is Glu-91. The Radical SAM core domain occupies 97-326 (YRFGNTACVS…CTVRRELGSD (230 aa)). Residues Cys-104 and Cys-331 are joined by a disulfide bond. [4Fe-4S] cluster contacts are provided by Cys-111, Cys-115, and Cys-118. S-adenosyl-L-methionine contacts are provided by residues 157-158 (GE), Ser-189, 212-214 (SLH), and Asn-288. Cys-331 (S-methylcysteine intermediate) is an active-site residue.

It belongs to the radical SAM superfamily. RlmN family. [4Fe-4S] cluster is required as a cofactor.

The protein resides in the cytoplasm. It catalyses the reaction adenosine(2503) in 23S rRNA + 2 reduced [2Fe-2S]-[ferredoxin] + 2 S-adenosyl-L-methionine = 2-methyladenosine(2503) in 23S rRNA + 5'-deoxyadenosine + L-methionine + 2 oxidized [2Fe-2S]-[ferredoxin] + S-adenosyl-L-homocysteine. It carries out the reaction adenosine(37) in tRNA + 2 reduced [2Fe-2S]-[ferredoxin] + 2 S-adenosyl-L-methionine = 2-methyladenosine(37) in tRNA + 5'-deoxyadenosine + L-methionine + 2 oxidized [2Fe-2S]-[ferredoxin] + S-adenosyl-L-homocysteine. Functionally, specifically methylates position 2 of adenine 2503 in 23S rRNA and position 2 of adenine 37 in tRNAs. The sequence is that of Probable dual-specificity RNA methyltransferase RlmN from Thermoanaerobacter pseudethanolicus (strain ATCC 33223 / 39E) (Clostridium thermohydrosulfuricum).